A 206-amino-acid polypeptide reads, in one-letter code: Ribosomal RNA small subunit methyltransferase G (206 aa).

S-adenosyl-L-methionine contacts are provided by residues glycine 73, leucine 78, 124-125, and arginine 139; that span reads VE.

This sequence belongs to the methyltransferase superfamily. RNA methyltransferase RsmG family.

It is found in the cytoplasm. It catalyses the reaction guanosine(527) in 16S rRNA + S-adenosyl-L-methionine = N(7)-methylguanosine(527) in 16S rRNA + S-adenosyl-L-homocysteine. Its function is as follows. Specifically methylates the N7 position of guanine in position 527 of 16S rRNA. This is Ribosomal RNA small subunit methyltransferase G from Sodalis glossinidius (strain morsitans).